The primary structure comprises 310 residues: NADH-cytochrome b5 reductase 1 (310 aa).

A helical transmembrane segment spans residues 32–52 (EWLPYAVALAAILSGGKVFSN). Residues 61-166 (TEFQNFELKE…RGPKGAMVYT (106 aa)) form the FAD-binding FR-type domain. Residues 146–161 (AGLRIGQTMKVRGPKG) and 172–209 (KIGMIAGGTGITPMLQIIKAIIRGRPRNGGNDTTQVDL) contribute to the FAD site.

Belongs to the flavoprotein pyridine nucleotide cytochrome reductase family. As to quaternary structure, monomer. Component of the 2-(3-amino-3-carboxypropyl)histidine synthase complex composed of DPH1, DPH2, DPH3 and a NADH-dependent reductase, predominantly CBR1. FAD is required as a cofactor.

It is found in the mitochondrion outer membrane. It catalyses the reaction 2 Fe(III)-[cytochrome b5] + NADH = 2 Fe(II)-[cytochrome b5] + NAD(+) + H(+). The catalysed reaction is 2 Fe(3+)-[Dph3] + NADH = 2 Fe(2+)-[Dph3] + NAD(+) + H(+). It participates in protein modification; peptidyl-diphthamide biosynthesis. NADH-dependent reductase for DPH3 and cytochrome b5. Required for the first step of diphthamide biosynthesis, a post-translational modification of histidine which occurs in elongation factor 2. DPH1 and DPH2 transfer a 3-amino-3-carboxypropyl (ACP) group from S-adenosyl-L-methionine (SAM) to a histidine residue, the reaction is assisted by a reduction system comprising DPH3 and a NADH-dependent reductase, predominantly CBR1. By reducing DPH3, also involved in the formation of the tRNA wobble base modification mcm5s 2U (5-methoxycarbonylmethyl-2-thiouridine), mediated by the elongator complex. The cytochrome b5/NADH cytochrome b5 reductase electron transfer system supports the catalytic activity of several sterol biosynthetic enzymes. This chain is NADH-cytochrome b5 reductase 1 (CBR1), found in Ajellomyces capsulatus (strain NAm1 / WU24) (Darling's disease fungus).